The chain runs to 612 residues: Calcium-dependent protein kinase 27 (612 aa).

Gly-2 carries N-myristoyl glycine lipidation. The tract at residues 23–132 (PRHAAPSSPS…AHIKRISSAG (110 aa)) is disordered. Low complexity predominate over residues 28–50 (PSSPSQPTTTSRSIPVVLPSAPS). The segment covering 51 to 100 (SKPPPPTQTAPPVPVVISEPPPPQPQPEPQPAAPSQPPPPQEQPSPPPPA) has biased composition (pro residues). Residues 117–127 (SRAKKPAHIKR) are compositionally biased toward basic residues. Positions 150 to 408 (YSLGRKLGQG…AHEVLCHPWL (259 aa)) constitute a Protein kinase domain. ATP is bound by residues 156–164 (LGQGQFGTT) and Lys-179. The Proton acceptor role is filled by Asp-274. Residues 414-444 (APDKPLDSAVLSRLRQFSAMNKLKKMALRVI) are autoinhibitory domain. 4 consecutive EF-hand domains span residues 451–486 (EEIA…VGAN), 487–522 (MKES…LNKV), 523–558 (ERED…FGIE), and 561–592 (RLED…TTTG). Ca(2+) contacts are provided by Asp-464, Asp-466, Ser-468, Gln-470, Glu-475, Asp-500, Asp-502, Ser-504, Thr-506, Glu-511, Asp-536, Asp-538, Ser-540, Tyr-542, Glu-547, Asp-570, Asp-572, Asp-574, Arg-576, and Glu-581.

Belongs to the protein kinase superfamily. Ser/Thr protein kinase family. CDPK subfamily.

The protein resides in the membrane. It catalyses the reaction L-seryl-[protein] + ATP = O-phospho-L-seryl-[protein] + ADP + H(+). The catalysed reaction is L-threonyl-[protein] + ATP = O-phospho-L-threonyl-[protein] + ADP + H(+). With respect to regulation, activated by calcium. Autophosphorylation may play an important role in the regulation of the kinase activity. Its function is as follows. May play a role in signal transduction pathways that involve calcium as a second messenger. The polypeptide is Calcium-dependent protein kinase 27 (Oryza sativa subsp. japonica (Rice)).